Consider the following 416-residue polypeptide: Phosphatidylinositol 5-phosphate 4-kinase type-2 gamma (416 aa).

A PIPK domain is found at 38–415; it reads ASDPMLSVFM…RFREFISNIF (378 aa).

In terms of processing, phosphorylated, phosphorylation is induced by EGF.

Its subcellular location is the endoplasmic reticulum. It localises to the cytoplasm. It catalyses the reaction a 1,2-diacyl-sn-glycero-3-phospho-(1D-myo-inositol-5-phosphate) + ATP = a 1,2-diacyl-sn-glycero-3-phospho-(1D-myo-inositol-4,5-bisphosphate) + ADP + H(+). The catalysed reaction is 1,2-dihexadecanoyl-sn-glycero-3-phospho-(1D-myo-inositol-5-phosphate) + ATP = 1,2-dihexadecanoyl-sn-glycero-3-phospho-(1D-myo-inositol-4,5-bisphosphate) + ADP + H(+). It carries out the reaction 1,2-dihexadecanoyl-sn-glycero-3-phospho-(1D-myo-inositol-5-phosphate) + GTP = 1,2-dihexadecanoyl-sn-glycero-3-phospho-(1D-myo-inositol-4,5-bisphosphate) + GDP + H(+). Functionally, phosphatidylinositol 5-phosphate 4-kinase with low enzymatic activity. May be a GTP sensor, has higher GTP-dependent kinase activity than ATP-dependent kinase activity. The sequence is that of Phosphatidylinositol 5-phosphate 4-kinase type-2 gamma (pip4k2c) from Danio rerio (Zebrafish).